A 602-amino-acid polypeptide reads, in one-letter code: Elongation factor 4 (602 aa).

The region spanning 7-188 is the tr-type G domain; sequence ENIRNFSIIA…AIVELIPPPK (182 aa). GTP is bound by residues 19–24 and 135–138; these read DHGKST and NKID.

Belongs to the TRAFAC class translation factor GTPase superfamily. Classic translation factor GTPase family. LepA subfamily.

It localises to the cell inner membrane. The enzyme catalyses GTP + H2O = GDP + phosphate + H(+). Its function is as follows. Required for accurate and efficient protein synthesis under certain stress conditions. May act as a fidelity factor of the translation reaction, by catalyzing a one-codon backward translocation of tRNAs on improperly translocated ribosomes. Back-translocation proceeds from a post-translocation (POST) complex to a pre-translocation (PRE) complex, thus giving elongation factor G a second chance to translocate the tRNAs correctly. Binds to ribosomes in a GTP-dependent manner. The sequence is that of Elongation factor 4 from Chlamydia abortus (strain DSM 27085 / S26/3) (Chlamydophila abortus).